Consider the following 311-residue polypeptide: Putative ankyrin repeat protein RF_0923 (311 aa).

ANK repeat units lie at residues 42-71 (IDNT…EQAI), 77-106 (NGNT…PQAI), 112-141 (NGNT…PQAI), 147-176 (NGNT…EQAI), and 182-213 (KGCT…AINH).

The polypeptide is Putative ankyrin repeat protein RF_0923 (Rickettsia felis (strain ATCC VR-1525 / URRWXCal2) (Rickettsia azadi)).